Here is a 185-residue protein sequence, read N- to C-terminus: Virulence membrane protein PagC (185 aa).

Residues 1 to 23 (MKNIILSTLVITTSVLVVNVAQA) form the signal peptide.

The protein belongs to the outer membrane OOP (TC 1.B.6) superfamily. Ail family.

It is found in the cell outer membrane. In terms of biological role, essential for full virulence and survival within macrophages. The protein is Virulence membrane protein PagC (pagC) of Salmonella typhimurium (strain LT2 / SGSC1412 / ATCC 700720).